We begin with the raw amino-acid sequence, 175 residues long: NADH dehydrogenase [ubiquinone] iron-sulfur protein 4, mitochondrial (175 aa).

The N-terminal 42 residues, 1-42, are a transit peptide targeting the mitochondrion; the sequence is MAAVSISVSLRQAMLGRRAMATAAVSVCRVPSRLLSTSTWKL. Ser173 carries the phosphoserine modification.

Belongs to the complex I NDUFS4 subunit family. In terms of assembly, this is a component of the iron-sulfur (IP) fragment of the enzyme. Interacts with BCAP31 and TOMM40; the interaction mediates its translocation to the mitochondria; the interaction with BCAP31 is direct.

It is found in the mitochondrion inner membrane. Functionally, accessory subunit of the mitochondrial membrane respiratory chain NADH dehydrogenase (Complex I), that is believed not to be involved in catalysis. Complex I functions in the transfer of electrons from NADH to the respiratory chain. The immediate electron acceptor for the enzyme is believed to be ubiquinone. The sequence is that of NADH dehydrogenase [ubiquinone] iron-sulfur protein 4, mitochondrial (Ndufs4) from Mus musculus (Mouse).